The sequence spans 200 residues: Pyridoxal 5'-phosphate synthase subunit PdxT (200 aa).

46-48 (GES) is a binding site for L-glutamine. Residue cysteine 78 is the Nucleophile of the active site. L-glutamine is bound by residues arginine 107 and 138–139 (IR). Residues histidine 175 and glutamate 177 each act as charge relay system in the active site.

The protein belongs to the glutaminase PdxT/SNO family. As to quaternary structure, in the presence of PdxS, forms a dodecamer of heterodimers. Only shows activity in the heterodimer.

The catalysed reaction is aldehydo-D-ribose 5-phosphate + D-glyceraldehyde 3-phosphate + L-glutamine = pyridoxal 5'-phosphate + L-glutamate + phosphate + 3 H2O + H(+). It carries out the reaction L-glutamine + H2O = L-glutamate + NH4(+). It participates in cofactor biosynthesis; pyridoxal 5'-phosphate biosynthesis. Functionally, catalyzes the hydrolysis of glutamine to glutamate and ammonia as part of the biosynthesis of pyridoxal 5'-phosphate. The resulting ammonia molecule is channeled to the active site of PdxS. The sequence is that of Pyridoxal 5'-phosphate synthase subunit PdxT from Corynebacterium glutamicum (strain R).